Reading from the N-terminus, the 141-residue chain is Large ribosomal subunit protein uL11 (141 aa).

This sequence belongs to the universal ribosomal protein uL11 family. In terms of assembly, part of the ribosomal stalk of the 50S ribosomal subunit. Interacts with L10 and the large rRNA to form the base of the stalk. L10 forms an elongated spine to which L12 dimers bind in a sequential fashion forming a multimeric L10(L12)X complex. Post-translationally, one or more lysine residues are methylated.

Its function is as follows. Forms part of the ribosomal stalk which helps the ribosome interact with GTP-bound translation factors. In Alkaliphilus metalliredigens (strain QYMF), this protein is Large ribosomal subunit protein uL11.